The primary structure comprises 496 residues: Cytochrome P450 monooxygenase cle4 (496 aa).

The chain crosses the membrane as a helical span at residues 12–34; it reads FFTSPFPLTVGILSISLSGVLWY. Cys-435 serves as a coordination point for heme.

It belongs to the cytochrome P450 family. It depends on heme as a cofactor.

It localises to the membrane. The protein operates within secondary metabolite biosynthesis; terpenoid biosynthesis. Cytochrome P450 monooxygenase; part of the cluster A that mediates the biosynthesis of chevalone E and its oxidized derivatives that possess a unique five-membered lactone ring and can synergistically enhance the cytotoxicity of doxorubicin (DOX) in breast cancer cells. Within the pathway, cle4 is involved in hydroxylation of the chavalone E scaffold at positions C-11 and C-12 and contributes with cle2 to the production of seven oxidation derivatives. The molecular scaffold is commonly biosynthesized by a series of enzymes including the non-reducing polyketide synthase (NR-PKS) cle1 that produces the alpha-pyrone triacetic acid lactone (TAL); The membrane-bound prenyltransferase cle5 that accepts TAL as its substrate to perform a C-3 geranylgeranylation reaction, in which the pathway-dedicated GGPS cle6 is required to provide GGPP, the other substrate of cle5; the FAD-dependent monooxygenase Cle3 that forms an (S)-epoxide ring at the terminal olefin of the geranylgeranyl group; and the terpene cyclase Cle7 that catalyzes the cyclization of the prenyl group that yields the pentacyclic pathway intermediate chevalone E. Chevalone E can derivatize into seven new oxidized analogs by the cytochrome P450 monooxygenases cle2 (acting at C-20) and cle4 (acting at C-11 and C-12). The protein is Cytochrome P450 monooxygenase cle4 of Aspergillus versicolor.